Here is a 456-residue protein sequence, read N- to C-terminus: RuvB-like helicase 1 (456 aa).

70 to 77 (GPPGTGKT) contacts ATP.

This sequence belongs to the RuvB family. As to quaternary structure, forms homohexameric rings. May form a dodecamer with rept made of two stacked hexameric rings. Component of the chromatin remodeling Ino80 complex.

The protein resides in the nucleus. It catalyses the reaction ATP + H2O = ADP + phosphate + H(+). In terms of biological role, acts as a transcriptional coactivator in Wg signaling caused by altered arm signaling. Pont and rept interfere antagonistically with nuclear arm signaling function, and are required to enhance or reduce arm activity, respectively. Also an essential cofactor for the normal function of Myc; required for cellular proliferation and growth. Its function is as follows. Proposed core component of the chromatin remodeling Ino80 complex which is involved in transcriptional regulation, DNA replication and probably DNA repair. In Drosophila pseudoobscura pseudoobscura (Fruit fly), this protein is RuvB-like helicase 1.